We begin with the raw amino-acid sequence, 70 residues long: Small ribosomal subunit protein bS21B (70 aa).

The segment at S37–Y70 is disordered. A compositionally biased stretch (basic residues) spans R45–Y70.

Belongs to the bacterial ribosomal protein bS21 family.

This Burkholderia pseudomallei (strain K96243) protein is Small ribosomal subunit protein bS21B.